Consider the following 371-residue polypeptide: MYNESPIIRRPSTRIYVGNVPIGDGAPIAVQSMTNTKTTDVAATVAQIRALEKVGADIVRVSVPTMDDAEAFKIIKQSVNVPLVADIHFDYRIALKVAEYGADCLRINPGNIGNEERIRSVVECARDKNIPIRIGVNGGSLEKDLMDKYREPTPEALFESAMRHVDILDRLNFDQFKVSVKASDVFLAVASYRLLAKQIRQPLHLGITEAGGMRAGSVKSAVGLGMLLAEGIGDTLRISLAADPVEEIKVGFDILKSLRIRSRGINFIACPSCSRQEFDVISTVNELERRLEDITTAMDVSIIGCVVNGPGEALVSDIGLTGGHAKSGYYDDGVRQKERFDNNKIIDGLEAKIRAKASMMANRIAITDKTE.

Positions 270, 273, 305, and 312 each coordinate [4Fe-4S] cluster.

It belongs to the IspG family. [4Fe-4S] cluster serves as cofactor.

The catalysed reaction is (2E)-4-hydroxy-3-methylbut-2-enyl diphosphate + oxidized [flavodoxin] + H2O + 2 H(+) = 2-C-methyl-D-erythritol 2,4-cyclic diphosphate + reduced [flavodoxin]. The protein operates within isoprenoid biosynthesis; isopentenyl diphosphate biosynthesis via DXP pathway; isopentenyl diphosphate from 1-deoxy-D-xylulose 5-phosphate: step 5/6. Functionally, converts 2C-methyl-D-erythritol 2,4-cyclodiphosphate (ME-2,4cPP) into 1-hydroxy-2-methyl-2-(E)-butenyl 4-diphosphate. This chain is 4-hydroxy-3-methylbut-2-en-1-yl diphosphate synthase (flavodoxin), found in Shewanella frigidimarina (strain NCIMB 400).